Reading from the N-terminus, the 81-residue chain is ATP synthase subunit C, plastid (81 aa).

The next 2 helical transmembrane spans lie at 3–23 and 61–81; these read PLIP…ASIG and EALT…NPFI.

The protein belongs to the ATPase C chain family. As to quaternary structure, F-type ATPases have 2 components, F(1) - the catalytic core - and F(0) - the membrane proton channel. F(1) has five subunits: alpha(3), beta(3), gamma(1), delta(1), epsilon(1). F(0) has four main subunits: a(1), b(1), b'(1) and c(10-14). The alpha and beta chains form an alternating ring which encloses part of the gamma chain. F(1) is attached to F(0) by a central stalk formed by the gamma and epsilon chains, while a peripheral stalk is formed by the delta, b and b' chains.

Its subcellular location is the plastid membrane. Its function is as follows. F(1)F(0) ATP synthase produces ATP from ADP in the presence of a proton or sodium gradient. F-type ATPases consist of two structural domains, F(1) containing the extramembraneous catalytic core and F(0) containing the membrane proton channel, linked together by a central stalk and a peripheral stalk. During catalysis, ATP synthesis in the catalytic domain of F(1) is coupled via a rotary mechanism of the central stalk subunits to proton translocation. Functionally, key component of the F(0) channel; it plays a direct role in translocation across the membrane. A homomeric c-ring of between 10-14 subunits forms the central stalk rotor element with the F(1) delta and epsilon subunits. The protein is ATP synthase subunit C, plastid of Aneura mirabilis (Parasitic liverwort).